A 277-amino-acid chain; its full sequence is Ras suppressor protein 1 (277 aa).

The interval Met1–Asp24 is disordered. Ser2 is subject to N-acetylserine. The span at Lys7–Asp24 shows a compositional bias: basic and acidic residues. LRR repeat units lie at residues His41–Lys63, Asn64–Leu85, Lys87–Pro109, Ala110–Leu133, Thr135–Leu156, Lys158–Leu179, and Gln181–Leu202. The tract at residues Met250 to Arg277 is disordered. Positions Pro256–Lys265 are enriched in basic and acidic residues.

Functionally, potentially plays a role in the Ras signal transduction pathway. Capable of suppressing v-Ras transformation in vitro. In Homo sapiens (Human), this protein is Ras suppressor protein 1 (RSU1).